The chain runs to 295 residues: Alpha-soluble NSF attachment protein (295 aa).

Residue Met-1 is modified to N-acetylmethionine. Ser-26, Ser-29, and Ser-195 each carry phosphoserine.

This sequence belongs to the SNAP family. Interacts with PRKCABP, and disrupts the interaction between GRIA2 and PRKCABP, leading to the internalization of GRIA2. Found in a complex with VAMP8. Component of a SNARE-like complex that contains at least ZW10, USE1L, RINT1, STX18 and NAPA/SNAP-alpha. Interacts with VTI1A. Interacts with STX12. Interacts with GNA12 (via N-terminus); the interaction promotes CDH5 localization to plasma membrane.

Its subcellular location is the cell membrane. In terms of biological role, required for vesicular transport between the endoplasmic reticulum and the Golgi apparatus. Together with GNA12 promotes CDH5 localization to plasma membrane. The sequence is that of Alpha-soluble NSF attachment protein (NAPA) from Homo sapiens (Human).